The chain runs to 809 residues: Ferric-pyoverdine BN7/BN8 receptor (809 aa).

An N-terminal signal peptide occupies residues 1–45; that stretch reads MNHTARKRQGWQRSVSQKLAGAVVQGIACMGASAPLLLMPAWATA. Residues 166–273 enclose the TBDR plug domain; that stretch reads TPRETPQSLT…PSATINLIRK (108 aa). Residues 278–809 form the TBDR beta-barrel domain; that stretch reads EAQASITGEA…NVMTSFKYSF (532 aa). A TonB C-terminal box motif is present at residues 792–809; it reads YGVYGTPRNVMTSFKYSF.

This sequence belongs to the TonB-dependent receptor family.

It localises to the cell outer membrane. In terms of biological role, specific receptor for the siderophores ferric pyoverdines (pseudobactins) BN8 and BN7, iron chelating molecules that allow the organism to extract iron from the environment, especially under iron-restricted conditions. The protein is Ferric-pyoverdine BN7/BN8 receptor (pupB) of Pseudomonas putida (Arthrobacter siderocapsulatus).